Reading from the N-terminus, the 897-residue chain is Valine--tRNA ligase (897 aa).

Residues proline 46–histidine 56 carry the 'HIGH' region motif. Residues lysine 532–threonine 536 carry the 'KMSKS' region motif. Lysine 535 serves as a coordination point for ATP. Residues leucine 839–asparagine 897 are a coiled coil.

The protein belongs to the class-I aminoacyl-tRNA synthetase family. ValS type 1 subfamily. In terms of assembly, monomer.

It localises to the cytoplasm. The catalysed reaction is tRNA(Val) + L-valine + ATP = L-valyl-tRNA(Val) + AMP + diphosphate. Catalyzes the attachment of valine to tRNA(Val). As ValRS can inadvertently accommodate and process structurally similar amino acids such as threonine, to avoid such errors, it has a 'posttransfer' editing activity that hydrolyzes mischarged Thr-tRNA(Val) in a tRNA-dependent manner. This chain is Valine--tRNA ligase, found in Gloeobacter violaceus (strain ATCC 29082 / PCC 7421).